A 101-amino-acid polypeptide reads, in one-letter code: Small ribosomal subunit protein uS14 (101 aa).

Residues 1–10 (MAKKSSIEKN) are compositionally biased toward basic and acidic residues. Positions 1-23 (MAKKSSIEKNNRRRKMTKNAAPK) are disordered. Over residues 11-23 (NRRRKMTKNAAPK) the composition is skewed to basic residues.

This sequence belongs to the universal ribosomal protein uS14 family. In terms of assembly, part of the 30S ribosomal subunit. Contacts proteins S3 and S10.

Functionally, binds 16S rRNA, required for the assembly of 30S particles and may also be responsible for determining the conformation of the 16S rRNA at the A site. The chain is Small ribosomal subunit protein uS14 from Rhodopseudomonas palustris (strain BisB5).